The primary structure comprises 475 residues: MSPKTETKASVGFKAGVKDYRLTYYTPEYQTKDTDILAAFRVTPQPGVPPEEAGAAVAAESSTGTWTTVWTDGLTSLDRYKGRCYDIEPVPGEENQFIAYVAYPLDLFEEGSVTNMFTSIVGNVFGFKALRALRLEDLRVPPAYSKTFQGPPHGIQVERDKLNKYGRPLLGCTIKPKLGLSAKNYGRAVYECLRGGLDFTKDDENVNSQPFMRWRDRFCFCAEAIYKAQAETGEIKGHYLNATAGTCEEMIKRAVFARELGVPIVMHDYLTGGFTANTSLAHYCRDNGLLLHIHRAMHAVIDRQRNHGMHFRVLAKALRMSGGDHIHAGTVVGKLEGERDVTLGFVDLLRDDFIERDRSRGIYFTQDWVSMPGVLPVASGGIHVWHMPALTEIFGDDSVLQFGGGTLGHPWGNAPGAVANRVALEACVQARNEGRDLAREGNEVIREASKWSPELAAACEVWKEIKFEFEAMDVL.

Residues 1–2 (MS) constitute a propeptide that is removed on maturation. Residue P3 is modified to N-acetylproline. An N6,N6,N6-trimethyllysine modification is found at K14. N123 and T173 together coordinate substrate. The active-site Proton acceptor is K175. K177 contributes to the substrate binding site. Residues K201, D203, and E204 each coordinate Mg(2+). The residue at position 201 (K201) is an N6-carboxylysine. Catalysis depends on H294, which acts as the Proton acceptor. The substrate site is built by R295, H327, and S379.

The protein belongs to the RuBisCO large chain family. Type I subfamily. Heterohexadecamer of 8 large chains and 8 small chains; disulfide-linked. The disulfide link is formed within the large subunit homodimers. Mg(2+) is required as a cofactor. Post-translationally, the disulfide bond which can form in the large chain dimeric partners within the hexadecamer appears to be associated with oxidative stress and protein turnover.

It is found in the plastid. Its subcellular location is the chloroplast. The enzyme catalyses 2 (2R)-3-phosphoglycerate + 2 H(+) = D-ribulose 1,5-bisphosphate + CO2 + H2O. The catalysed reaction is D-ribulose 1,5-bisphosphate + O2 = 2-phosphoglycolate + (2R)-3-phosphoglycerate + 2 H(+). RuBisCO catalyzes two reactions: the carboxylation of D-ribulose 1,5-bisphosphate, the primary event in carbon dioxide fixation, as well as the oxidative fragmentation of the pentose substrate in the photorespiration process. Both reactions occur simultaneously and in competition at the same active site. The sequence is that of Ribulose bisphosphate carboxylase large chain from Cycas taitungensis (Prince sago).